The primary structure comprises 143 residues: Glutamyl-tRNA(Gln) amidotransferase subunit C, chloroplastic/mitochondrial (143 aa).

This sequence belongs to the GatC family. Subunit of the heterotrimeric GatCAB amidotransferase (AdT) complex, composed of A, B and C subunits.

The protein localises to the mitochondrion. Its subcellular location is the plastid. The protein resides in the chloroplast. The catalysed reaction is L-glutamyl-tRNA(Gln) + L-glutamine + ATP + H2O = L-glutaminyl-tRNA(Gln) + L-glutamate + ADP + phosphate + H(+). Its function is as follows. Allows the formation of correctly charged Gln-tRNA(Gln) through the transamidation of misacylated Glu-tRNA(Gln) in chloroplasts and mitochondria. The reaction takes place in the presence of glutamine and ATP through an activated gamma-phospho-Glu-tRNA(Gln). The polypeptide is Glutamyl-tRNA(Gln) amidotransferase subunit C, chloroplastic/mitochondrial (Ricinus communis (Castor bean)).